The sequence spans 334 residues: Holliday junction branch migration complex subunit RuvB (334 aa).

A large ATPase domain (RuvB-L) region spans residues 4–184; it reads ADRLISAGVI…FGIVQRLEFY (181 aa). ATP-binding positions include Ile-23, Arg-24, Gly-65, Lys-68, Thr-69, Thr-70, 131 to 133, Arg-174, Tyr-184, and Arg-221; that span reads EDY. Thr-69 lines the Mg(2+) pocket. Residues 185 to 255 are small ATPAse domain (RuvB-S); it reads QVADLEHIVS…VAMKALDMLN (71 aa). Positions 258–334 are head domain (RuvB-H); it reads AEGFDFMDRK…YKHFGITREE (77 aa). Arg-294, Arg-313, and Arg-318 together coordinate DNA.

This sequence belongs to the RuvB family. As to quaternary structure, homohexamer. Forms an RuvA(8)-RuvB(12)-Holliday junction (HJ) complex. HJ DNA is sandwiched between 2 RuvA tetramers; dsDNA enters through RuvA and exits via RuvB. An RuvB hexamer assembles on each DNA strand where it exits the tetramer. Each RuvB hexamer is contacted by two RuvA subunits (via domain III) on 2 adjacent RuvB subunits; this complex drives branch migration. In the full resolvosome a probable DNA-RuvA(4)-RuvB(12)-RuvC(2) complex forms which resolves the HJ.

The protein localises to the cytoplasm. It carries out the reaction ATP + H2O = ADP + phosphate + H(+). Functionally, the RuvA-RuvB-RuvC complex processes Holliday junction (HJ) DNA during genetic recombination and DNA repair, while the RuvA-RuvB complex plays an important role in the rescue of blocked DNA replication forks via replication fork reversal (RFR). RuvA specifically binds to HJ cruciform DNA, conferring on it an open structure. The RuvB hexamer acts as an ATP-dependent pump, pulling dsDNA into and through the RuvAB complex. RuvB forms 2 homohexamers on either side of HJ DNA bound by 1 or 2 RuvA tetramers; 4 subunits per hexamer contact DNA at a time. Coordinated motions by a converter formed by DNA-disengaged RuvB subunits stimulates ATP hydrolysis and nucleotide exchange. Immobilization of the converter enables RuvB to convert the ATP-contained energy into a lever motion, pulling 2 nucleotides of DNA out of the RuvA tetramer per ATP hydrolyzed, thus driving DNA branch migration. The RuvB motors rotate together with the DNA substrate, which together with the progressing nucleotide cycle form the mechanistic basis for DNA recombination by continuous HJ branch migration. Branch migration allows RuvC to scan DNA until it finds its consensus sequence, where it cleaves and resolves cruciform DNA. In Yersinia enterocolitica serotype O:8 / biotype 1B (strain NCTC 13174 / 8081), this protein is Holliday junction branch migration complex subunit RuvB.